The chain runs to 169 residues: Putative hydrolase 111R (169 aa).

Positions 46-169 (FEKRKAGVFV…QKILMALSCN (124 aa)) constitute a Nudix hydrolase domain. The short motif at 76-98 (GHMEAYDHSPKTCAERELKEETG) is the Nudix box element. 3 residues coordinate Mg(2+): glutamate 92, glutamate 96, and aspartate 138.

It belongs to the Nudix hydrolase family. Requires Mg(2+) as cofactor. Mn(2+) is required as a cofactor.

The polypeptide is Putative hydrolase 111R (Aedes vexans (Inland floodwater mosquito)).